A 269-amino-acid polypeptide reads, in one-letter code: uncharacterized protein (269 aa).

This is an uncharacterized protein from Escherichia coli (strain K12).